A 542-amino-acid chain; its full sequence is Prolyl 4-hydroxylase subunit alpha-3 (542 aa).

Positions 1-24 (MGPGARLALLALLALGGDPAAATG) are cleaved as a signal peptide. Positions 105–129 (LEATENIRALKDGYEKVEQDLPAFE) form a coiled coil. The TPR repeat unit spans residues 225 to 258 (EDALDYLAFACFQVGNVSCALSLSREFLVYSPDN). Asparagine 240 is a glycosylation site (N-linked (GlcNAc...) asparagine). A Fe2OG dioxygenase domain is found at 420–527 (YAEYLQVVNY…KWVANKWIHE (108 aa)). The Fe cation site is built by histidine 438 and aspartate 440. N-linked (GlcNAc...) asparagine glycosylation is present at asparagine 480. Residue histidine 508 coordinates Fe cation. Lysine 518 contacts 2-oxoglutarate.

Belongs to the P4HA family. As to quaternary structure, heterotetramer of two alpha-3 chains and two beta chains (the beta chain is the multi-functional PDI). Fe(2+) is required as a cofactor. L-ascorbate serves as cofactor. Post-translationally, N-glycosylation plays no role in the catalytic activity.

The protein localises to the endoplasmic reticulum lumen. It catalyses the reaction L-prolyl-[collagen] + 2-oxoglutarate + O2 = trans-4-hydroxy-L-prolyl-[collagen] + succinate + CO2. Its function is as follows. Catalyzes the post-translational formation of 4-hydroxyproline in -Xaa-Pro-Gly- sequences in collagens and other proteins. In Mus musculus (Mouse), this protein is Prolyl 4-hydroxylase subunit alpha-3 (P4ha3).